The following is a 2893-amino-acid chain: Genome polyprotein (2893 aa).

The interval 206–226 (VQAKPEMDNPNPGPDGEGEVE) is disordered. The region spanning 1446–1612 (SKLKTDLMEM…EEKKRGCKHC (167 aa)) is the SF3 helicase domain. Position 1472 to 1479 (1472 to 1479 (GASGIGKS)) interacts with ATP. Positions 2119–2345 (GSTQQVDAAV…VAEPLVHEMF (227 aa)) constitute a Peptidase C3 domain. Active-site for 3C-like protease activity residues include histidine 2170, asparagine 2227, and cysteine 2307. The 131-residue stretch at 2633-2763 (THIVTGDYKN…NVSDNMIDKF (131 aa)) folds into the RdRp catalytic domain.

Specific enzymatic cleavages in vivo by the viral 3C-like protease yield three mature proteins. 3C-like protease is cleaved autocatalytically.

It localises to the virion. It catalyses the reaction RNA(n) + a ribonucleoside 5'-triphosphate = RNA(n+1) + diphosphate. The enzyme catalyses ATP + H2O = ADP + phosphate + H(+). Its activity is regulated as follows. Inhibited by Rupintrivir. Its function is as follows. Capsid protein that assembles with the capsid proteins VP1 and VP3 to form a pseudo-T3 icosahedral capsid of about 40 nm. Capsid protein that assembles with the capsid proteins VP1 and VP2 to form a pseudo T3 icosahedral capsid of about 40 nm. Functionally, capsid protein that assembles with the capsid proteins VP2 and VP3 to form a pseudo T3 icosahedral capsid of about 40 nm. In terms of biological role, displays RNA helix destabilizing and strand annealing acceleration activity. This activity is necessary at several points during genome replication, for example to separate duplexes that form after genome replication. Its function is as follows. Cysteine protease that generates mature viral proteins from the precursor polyprotein. Replicates genomic and antigenomic RNA. This chain is Genome polyprotein, found in Deformed wing virus (DWV).